A 354-amino-acid chain; its full sequence is Methylthioribose-1-phosphate isomerase (354 aa).

Residues 58–60, arginine 101, and glutamine 204 each bind substrate; that span reads RGA. Aspartate 245 serves as the catalytic Proton donor. Substrate is bound at residue 255-256; the sequence is NK.

Belongs to the eIF-2B alpha/beta/delta subunits family. MtnA subfamily.

It carries out the reaction 5-(methylsulfanyl)-alpha-D-ribose 1-phosphate = 5-(methylsulfanyl)-D-ribulose 1-phosphate. It participates in amino-acid biosynthesis; L-methionine biosynthesis via salvage pathway; L-methionine from S-methyl-5-thio-alpha-D-ribose 1-phosphate: step 1/6. In terms of biological role, catalyzes the interconversion of methylthioribose-1-phosphate (MTR-1-P) into methylthioribulose-1-phosphate (MTRu-1-P). The protein is Methylthioribose-1-phosphate isomerase of Xanthomonas euvesicatoria pv. vesicatoria (strain 85-10) (Xanthomonas campestris pv. vesicatoria).